Here is a 403-residue protein sequence, read N- to C-terminus: Esterase LipC (403 aa).

Residues Ser237, Asp334, and His367 contribute to the active site.

This sequence belongs to the 'GDXG' lipolytic enzyme family.

The protein resides in the cell surface. It is found in the secreted. The protein localises to the cell wall. Its subcellular location is the capsule. The catalysed reaction is a fatty acid ester + H2O = an aliphatic alcohol + a fatty acid + H(+). It carries out the reaction a butanoate ester + H2O = an aliphatic alcohol + butanoate + H(+). It catalyses the reaction a hexanoate ester + H2O = an aliphatic alcohol + hexanoate + H(+). The enzyme catalyses an acetyl ester + H2O = an aliphatic alcohol + acetate + H(+). The catalysed reaction is an octanoate ester + H2O = an aliphatic alcohol + octanoate + H(+). It carries out the reaction decanoate ester + H2O = decanoate + an aliphatic alcohol + H(+). Functionally, esterase that can hydrolyze short-chain esters with the carbon chain containing 2 to 10 carbon atoms. Does not have lipase activity. Is highly immunogenic and elicits strong humoral immune responses in both HIV-negative (HIV-) and HIV-positive (HIV+) tuberculosis (TB) patients. Also elicits pro-inflammatory cytokine and chemokine responses from macrophages and pulmonary epithelial cells. May participate in the progression of active tuberculosis both by contributing to the utilization of lipid substrates for bacterial growth and replication, and by modulating immune responses. In Mycobacterium tuberculosis (strain ATCC 25618 / H37Rv), this protein is Esterase LipC.